A 202-amino-acid chain; its full sequence is MPPKTKGKGRKAATRKKKKNSSPGVEAEAKHRLVLLEKELLQDHLALQREEACRAKASEDRLKQRLQGLEAELERTQSEGRAVYAEMSRQRQALQKELGTRSKRLEEEVRGLRERLETCQREAKTAREEAERALREQDGTLTELRAHVAHMEAKYEEILHDNLNCLLAKLRAVKPQWDAATLRLHTRHKEQLRRFGLNPLDL.

The segment covering M1–N20 has biased composition (basic residues). Residues M1–A29 form a disordered region. Residues R54–A149 are a coiled coil.

Belongs to the DRC12 family. Component of the nexin-dynein regulatory complex (N-DRC).

It is found in the cytoplasm. Its subcellular location is the cytoskeleton. The protein resides in the flagellum axoneme. Component of the nexin-dynein regulatory complex (N-DRC), a key regulator of ciliary/flagellar motility which maintains the alignment and integrity of the distal axoneme and regulates microtubule sliding in motile axonemes. In Rattus norvegicus (Rat), this protein is Dynein regulatory complex protein 12 (Drc12).